The following is a 259-amino-acid chain: tRNA (guanine-N(1)-)-methyltransferase (259 aa).

Residues Gly113 and 133 to 138 (IGDYVL) each bind S-adenosyl-L-methionine.

Belongs to the RNA methyltransferase TrmD family. In terms of assembly, homodimer.

Its subcellular location is the cytoplasm. It carries out the reaction guanosine(37) in tRNA + S-adenosyl-L-methionine = N(1)-methylguanosine(37) in tRNA + S-adenosyl-L-homocysteine + H(+). Specifically methylates guanosine-37 in various tRNAs. This is tRNA (guanine-N(1)-)-methyltransferase from Xanthomonas oryzae pv. oryzae (strain MAFF 311018).